The chain runs to 1292 residues: (E3-independent) E2 ubiquitin-conjugating enzyme (1292 aa).

A compositionally biased stretch (pro residues) spans Met1–Ala37. 2 disordered regions span residues Met1–Ser56 and Glu85–Ala114. A compositionally biased stretch (low complexity) spans Pro38–Ser56. Ser50, Ser87, Ser89, Ser399, and Ser401 each carry phosphoserine. Disordered regions lie at residues Ser401–Gln459, Arg472–Ser519, and Ile714–Gly746. Basic and acidic residues predominate over residues Cys406–Ala427. Ser441 is subject to Phosphoserine. Positions Gln478–Asp490 are enriched in acidic residues. Thr488 and Thr491 each carry phosphothreonine. Residues Thr491–Thr510 show a composition bias toward low complexity. The Nuclear localization signal signature appears at Arg512–Arg536. Ser515 carries the post-translational modification Phosphoserine. The span at Asp732–Glu742 shows a compositional bias: acidic residues. Residues Arg812 to Val882 are a coiled coil. Ser836 bears the Phosphoserine mark. Phosphothreonine is present on Thr838. The residue at position 839 (Ser839) is a Phosphoserine. A compositionally biased stretch (basic and acidic residues) spans Val882–Glu893. The segment at Val882–Pro903 is disordered. Position 896 is a phosphoserine (Ser896). The UBC core domain occupies Lys953–Thr1113. Cys1040 (glycyl thioester intermediate) is an active-site residue. The segment at Asn1160 to Lys1248 is disordered.

Belongs to the ubiquitin-conjugating enzyme family. In terms of assembly, interacts with CPNE1 (via VWFA domain) and CPNE4 (via VWFA domain). Interacts with UBR2. Post-translationally, phosphorylated. Phosphorylation affects subcellular location. Ubiquitinated: autoubiquitinates, possibly affecting its subcellular location. In terms of tissue distribution, predominantly expressed in skeletal muscle and heart.

The protein localises to the cytoplasm. It is found in the nucleus. The enzyme catalyses S-ubiquitinyl-[E1 ubiquitin-activating enzyme]-L-cysteine + [acceptor protein]-L-lysine = [E1 ubiquitin-activating enzyme]-L-cysteine + N(6)-monoubiquitinyl-[acceptor protein]-L-lysine.. Its pathway is protein modification; protein ubiquitination. Its activity is regulated as follows. inhibited by phenylarsine oxide (PAO). E2/E3 hybrid ubiquitin-protein ligase that displays both E2 and E3 ligase activities and mediates monoubiquitination of target proteins. Negatively regulates TRAF6-mediated NF-kappa-B activation independently of its E2 activity. Acts as a positive regulator of BMP7 signaling by mediating monoubiquitination of SMAD6, thereby regulating adipogenesis. Mediates monoubiquitination at different sites of the nuclear localization signal (NLS) of BAP1, leading to cytoplasmic retention of BAP1. Also able to monoubiquitinate the NLS of other chromatin-associated proteins, such as INO80 and CXXC1, affecting their subcellular location. Acts as a regulator of retrograde transport by assisting the TRIM27:MAGEL2 E3 ubiquitin ligase complex to mediate 'Lys-63'-linked ubiquitination of WASHC1, leading to promote endosomal F-actin assembly. This chain is (E3-independent) E2 ubiquitin-conjugating enzyme (UBE2O), found in Homo sapiens (Human).